A 120-amino-acid chain; its full sequence is Immunoglobulin kappa variable 2-30 (120 aa).

An N-terminal signal peptide occupies residues Met-1 to Gly-20. Residues Asp-21–Cys-43 form a framework-1 region. The 100-residue stretch at Asp-21–Pro-120 folds into the Ig-like domain. Cys-43 and Cys-113 are disulfide-bonded. The segment at Arg-44–Asn-59 is complementarity-determining-1. The interval Trp-60–Tyr-74 is framework-2. Residues Lys-75–Ser-81 form a complementarity-determining-2 region. Residues Gly-82–Cys-113 are framework-3. Positions Met-114–Pro-120 are complementarity-determining-3.

In terms of assembly, immunoglobulins are composed of two identical heavy chains and two identical light chains; disulfide-linked.

It localises to the secreted. The protein resides in the cell membrane. Functionally, v region of the variable domain of immunoglobulin light chains that participates in the antigen recognition. Immunoglobulins, also known as antibodies, are membrane-bound or secreted glycoproteins produced by B lymphocytes. In the recognition phase of humoral immunity, the membrane-bound immunoglobulins serve as receptors which, upon binding of a specific antigen, trigger the clonal expansion and differentiation of B lymphocytes into immunoglobulins-secreting plasma cells. Secreted immunoglobulins mediate the effector phase of humoral immunity, which results in the elimination of bound antigens. The antigen binding site is formed by the variable domain of one heavy chain, together with that of its associated light chain. Thus, each immunoglobulin has two antigen binding sites with remarkable affinity for a particular antigen. The variable domains are assembled by a process called V-(D)-J rearrangement and can then be subjected to somatic hypermutations which, after exposure to antigen and selection, allow affinity maturation for a particular antigen. This Homo sapiens (Human) protein is Immunoglobulin kappa variable 2-30.